Here is a 203-residue protein sequence, read N- to C-terminus: Sec-independent protein translocase protein TatB (203 aa).

Residues 1–21 (MFDIGWTELLVIAVVLIVVVG) traverse the membrane as a helical segment. The interval 179–203 (KPKRTTAVRKPATLKKPAQTKKDEA) is disordered.

Belongs to the TatB family. The Tat system comprises two distinct complexes: a TatABC complex, containing multiple copies of TatA, TatB and TatC subunits, and a separate TatA complex, containing only TatA subunits. Substrates initially bind to the TatABC complex, which probably triggers association of the separate TatA complex to form the active translocon.

It is found in the cell inner membrane. Part of the twin-arginine translocation (Tat) system that transports large folded proteins containing a characteristic twin-arginine motif in their signal peptide across membranes. Together with TatC, TatB is part of a receptor directly interacting with Tat signal peptides. TatB may form an oligomeric binding site that transiently accommodates folded Tat precursor proteins before their translocation. The protein is Sec-independent protein translocase protein TatB of Rhizobium johnstonii (strain DSM 114642 / LMG 32736 / 3841) (Rhizobium leguminosarum bv. viciae).